Consider the following 204-residue polypeptide: LexA repressor (204 aa).

Positions 29–49 (VREIGDAVGLMSSSTVHGHLQ) form a DNA-binding region, H-T-H motif. Residues S127 and K164 each act as for autocatalytic cleavage activity in the active site.

The protein belongs to the peptidase S24 family. In terms of assembly, homodimer.

It catalyses the reaction Hydrolysis of Ala-|-Gly bond in repressor LexA.. Its function is as follows. Represses a number of genes involved in the response to DNA damage (SOS response), including recA and lexA. In the presence of single-stranded DNA, RecA interacts with LexA causing an autocatalytic cleavage which disrupts the DNA-binding part of LexA, leading to derepression of the SOS regulon and eventually DNA repair. This Desulfitobacterium hafniense (strain DSM 10664 / DCB-2) protein is LexA repressor.